We begin with the raw amino-acid sequence, 207 residues long: Small ribosomal subunit protein uS4 (207 aa).

The interval lysine 31–glutamine 55 is disordered. Residues glycine 42–glycine 53 are compositionally biased toward polar residues. The S4 RNA-binding domain maps to serine 97 to leucine 160.

Belongs to the universal ribosomal protein uS4 family. As to quaternary structure, part of the 30S ribosomal subunit. Contacts protein S5. The interaction surface between S4 and S5 is involved in control of translational fidelity.

In terms of biological role, one of the primary rRNA binding proteins, it binds directly to 16S rRNA where it nucleates assembly of the body of the 30S subunit. Functionally, with S5 and S12 plays an important role in translational accuracy. The protein is Small ribosomal subunit protein uS4 of Burkholderia ambifaria (strain MC40-6).